Here is a 488-residue protein sequence, read N- to C-terminus: UDP-glycosyltransferase 85A3 (488 aa).

Residues Ser-306, 363–365 (CPQ), 380–388 (HCGWNSTLE), and 402–405 (FAEQ) contribute to the UDP-alpha-D-glucose site.

This sequence belongs to the UDP-glycosyltransferase family. Expressed in roots and flowers.

In Arabidopsis thaliana (Mouse-ear cress), this protein is UDP-glycosyltransferase 85A3 (UGT85A3).